A 350-amino-acid chain; its full sequence is S-adenosylmethionine:tRNA ribosyltransferase-isomerase (350 aa).

Belongs to the QueA family. Monomer.

The protein localises to the cytoplasm. The catalysed reaction is 7-aminomethyl-7-carbaguanosine(34) in tRNA + S-adenosyl-L-methionine = epoxyqueuosine(34) in tRNA + adenine + L-methionine + 2 H(+). Its pathway is tRNA modification; tRNA-queuosine biosynthesis. Transfers and isomerizes the ribose moiety from AdoMet to the 7-aminomethyl group of 7-deazaguanine (preQ1-tRNA) to give epoxyqueuosine (oQ-tRNA). The chain is S-adenosylmethionine:tRNA ribosyltransferase-isomerase from Aliivibrio salmonicida (strain LFI1238) (Vibrio salmonicida (strain LFI1238)).